The sequence spans 794 residues: Protocadherin beta-6 (794 aa).

An N-terminal signal peptide occupies residues 1–27 (MMQTKVQNKKRQVAFFILLMLWGEVGS). The Extracellular segment spans residues 28-688 (ESIQYSVLEE…AQADSLTVYL (661 aa)). Cadherin domains follow at residues 34–132 (VLEE…APEF), 137–241 (MLLK…VPEF), 246–345 (YEAQ…APEL), 350–449 (FISL…APAF), and 454–559 (YTLF…SPFV). Asn-46 carries N-linked (GlcNAc...) asparagine glycosylation. Cysteines 95 and 101 form a disulfide. N-linked (GlcNAc...) asparagine glycosylation occurs at Asn-183. N-linked (GlcNAc...) asparagine glycosylation is present at Asn-416. Asn-565 carries N-linked (GlcNAc...) asparagine glycosylation. In terms of domain architecture, Cadherin 6 spans 566 to 669 (GSAPCTELVP…LVDGFSQPYL (104 aa)). The helical transmembrane segment at 689-709 (VVALASVSSLFLFSVLLFVAV) threads the bilayer. The Cytoplasmic segment spans residues 710 to 794 (RLCRRSRAAS…PTSRNSFPFS (85 aa)). A disordered region spans residues 773 to 794 (PPQGTEREMEETPTSRNSFPFS). The span at 784-794 (TPTSRNSFPFS) shows a compositional bias: polar residues.

In terms of assembly, forms homodimers in trans (molecules expressed by two different cells). Forms promiscuous heterodimers in cis (at the plasma membrane of the same cell) with other protocadherins.

It localises to the cell membrane. Its function is as follows. Calcium-dependent cell-adhesion protein involved in cells self-recognition and non-self discrimination. Thereby, it is involved in the establishment and maintenance of specific neuronal connections in the brain. This is Protocadherin beta-6 from Homo sapiens (Human).